A 542-amino-acid polypeptide reads, in one-letter code: CTP synthase (542 aa).

The interval methionine 1–isoleucine 265 is amidoligase domain. Serine 13 is a CTP binding site. A UTP-binding site is contributed by serine 13. ATP-binding positions include serine 14–isoleucine 19 and aspartate 71. Aspartate 71 and glutamate 139 together coordinate Mg(2+). CTP-binding positions include aspartate 146–glutamate 148, lysine 186–glutamine 191, and lysine 222. Residues lysine 186 to glutamine 191 and lysine 222 contribute to the UTP site. A Glutamine amidotransferase type-1 domain is found at threonine 291 to leucine 541. Position 353 (glycine 353) interacts with L-glutamine. Cysteine 380 (nucleophile; for glutamine hydrolysis) is an active-site residue. L-glutamine-binding positions include phenylalanine 381 to glutamine 384, glutamate 404, and arginine 469. Active-site residues include histidine 514 and glutamate 516.

It belongs to the CTP synthase family. In terms of assembly, homotetramer.

It carries out the reaction UTP + L-glutamine + ATP + H2O = CTP + L-glutamate + ADP + phosphate + 2 H(+). The enzyme catalyses L-glutamine + H2O = L-glutamate + NH4(+). It catalyses the reaction UTP + NH4(+) + ATP = CTP + ADP + phosphate + 2 H(+). It participates in pyrimidine metabolism; CTP biosynthesis via de novo pathway; CTP from UDP: step 2/2. With respect to regulation, allosterically activated by GTP, when glutamine is the substrate; GTP has no effect on the reaction when ammonia is the substrate. The allosteric effector GTP functions by stabilizing the protein conformation that binds the tetrahedral intermediate(s) formed during glutamine hydrolysis. Inhibited by the product CTP, via allosteric rather than competitive inhibition. Its function is as follows. Catalyzes the ATP-dependent amination of UTP to CTP with either L-glutamine or ammonia as the source of nitrogen. Regulates intracellular CTP levels through interactions with the four ribonucleotide triphosphates. The chain is CTP synthase from Agrobacterium fabrum (strain C58 / ATCC 33970) (Agrobacterium tumefaciens (strain C58)).